Here is a 255-residue protein sequence, read N- to C-terminus: MKRLNKLVLGIIFLFLVISITAGCGIGKEAEVKKSFEKTLSMYPIKNLEDLYDKEGYRDDQFDKNDKGTWIINSEMVIQPNNEDMVAKGMVLYMNRNTKTTNGYYYVDVTKDEDEGKPHDNEKRYPVKMVDNKIIPTKEIKDKNIKKEIENFKFFVQYGNFKDLSKYKDGDISYNPEVPSYSAKYQVTNDDYNVKQLRKRYDIPTNKAPKLLLKGTGNLKGSSVGYKDIEFTFVEKKGENIYFSDSLHLEPSEDK.

The first 23 residues, 1 to 23 (MKRLNKLVLGIIFLFLVISITAG), serve as a signal peptide directing secretion. The N-palmitoyl cysteine moiety is linked to residue Cys-24. The S-diacylglycerol cysteine moiety is linked to residue Cys-24.

This sequence belongs to the staphylococcal tandem lipoprotein family.

It localises to the cell membrane. This is an uncharacterized protein from Staphylococcus aureus (strain Mu50 / ATCC 700699).